Here is a 543-residue protein sequence, read N- to C-terminus: Transmembrane protease serine 13 (543 aa).

2 disordered regions span residues 1-96 and 109-129; these read MDRG…TRVY and RASP…PGLS. Topologically, residues 1–143 are cytoplasmic; that stretch reads MDRGSHRNSS…SWQETQRQLP (143 aa). Repeat copies occupy residues 14-17 and 18-22. The 4 X 4 AA repeats of T-P-P-Q stretch occupies residues 14 to 49; sequence TPPQASPARTSPARAPPQASPARTPPQASPARTPPQ. An 8 X 5 AA repeats of A-S-P-A-R region spans residues 18–69; that stretch reads ASPARTSPARAPPQASPARTPPQASPARTPPQASPARAPPPQASPARASPAR. The stretch at 23-27 is one 2-2; approximate repeat; sequence TSPAR. The segment covering 27-60 has biased composition (pro residues); it reads RAPPQASPARTPPQASPARTPPQASPARAPPPQA. One copy of the 1-2; approximate repeat lies at 28–31; that stretch reads APPQ. Tandem repeats lie at residues 32–36, 37–40, 41–45, 46–49, and 50–54. The stretch at 55-59 is one 2-6; approximate repeat; it reads APPPQ. Repeat copies occupy residues 60-64 and 65-69. 2 stretches are compositionally biased toward low complexity: residues 61–94 and 109–120; these read SPAR…SPTR and RASPARSAPATR. The chain crosses the membrane as a helical; Signal-anchor for type II membrane protein span at residues 144-164; the sequence is LIGCVILLISLVISLILLFYF. Residues 165–543 are Extracellular-facing; it reads WRGHTGIKYK…MESEVRFRKS (379 aa). Residues 180-202 enclose the LDL-receptor class A domain; sequence CPIHAVRCDGVVDCKMKSDELGC. The region spanning 199-301 is the SRCR domain; it reads ELGCVRFDWD…HCGLRAMTGR (103 aa). Intrachain disulfides connect cysteine 226–cysteine 290, cysteine 239–cysteine 293, and cysteine 327–cysteine 343. N-linked (GlcNAc...) asparagine glycosylation is found at asparagine 231 and asparagine 268. The Peptidase S1 domain maps to 302–535; it reads IVGGALTSES…VLPWIYRKME (234 aa). The active-site Charge relay system is histidine 342. Asparagine 381 is a glycosylation site (N-linked (GlcNAc...) asparagine). Aspartate 390 (charge relay system) is an active-site residue. A glycan (N-linked (GlcNAc...) asparagine) is linked at asparagine 421. Cystine bridges form between cysteine 424–cysteine 493, cysteine 456–cysteine 472, and cysteine 483–cysteine 511. Catalysis depends on serine 487, which acts as the Charge relay system.

It belongs to the peptidase S1 family. In terms of assembly, interacts with SPINT1/HAI-1; the interaction promotes the phosphorylation and cell membrane localization of TMPRSS13. Interacts with SPINT2/HAI-2; the interaction promotes the phosphorylation and cell membrane localization of TMPRSS13. In terms of processing, the inactive zymogen is post-translationally modified and then trafficked to the cell surface, whereby it undergoes autocatalytic cleavage resulting in an activated form that is released extracellularly. Post-translationally, phosphorylation is required for localization at the cell surface. Phosphorylation increases following inhibition of protease activity by SPINT2/HAI-2. As to expression, expressed in the suprabasal squamous epithelium of the epidermis, hair follicles, oral epithelium, cornea, upper digestive tract, transitional epithelium of the bladder, prostate, heart, intestine, kidney and thymus.

The protein localises to the cell membrane. Its subcellular location is the secreted. It localises to the cytoplasm. Its activity is regulated as follows. Cleavage of HGF is inhibited by SPINT1/HAI-1 via the BPTI/Kunitz inhibitor 1 domain. Its function is as follows. Serine protease. Cleaves the proform of PRSS8/prostasin to form the active protein. Cleaves the proform of HGF to form the active protein which promotes MAPK signaling. Promotes the formation of the stratum corneum and subsequently the epidermal barrier in embryos. This Mus musculus (Mouse) protein is Transmembrane protease serine 13 (Tmprss13).